A 229-amino-acid chain; its full sequence is uncharacterized protein (229 aa).

The HTH cro/C1-type domain occupies 24 to 78 (LRKWRSIFNASQSDLARKLGISPSVISDYESGRRKPGTAFLKKFVCALIELDGER). Residues 35 to 54 (QSDLARKLGISPSVISDYES) constitute a DNA-binding region (H-T-H motif).

This is an uncharacterized protein from Archaeoglobus fulgidus (strain ATCC 49558 / DSM 4304 / JCM 9628 / NBRC 100126 / VC-16).